The primary structure comprises 443 residues: ATP-dependent protease ATPase subunit HslU (443 aa).

ATP contacts are provided by residues isoleucine 18, 60-65 (GVGKTE), aspartate 256, glutamate 321, and arginine 393.

It belongs to the ClpX chaperone family. HslU subfamily. In terms of assembly, a double ring-shaped homohexamer of HslV is capped on each side by a ring-shaped HslU homohexamer. The assembly of the HslU/HslV complex is dependent on binding of ATP.

The protein localises to the cytoplasm. ATPase subunit of a proteasome-like degradation complex; this subunit has chaperone activity. The binding of ATP and its subsequent hydrolysis by HslU are essential for unfolding of protein substrates subsequently hydrolyzed by HslV. HslU recognizes the N-terminal part of its protein substrates and unfolds these before they are guided to HslV for hydrolysis. This chain is ATP-dependent protease ATPase subunit HslU, found in Wigglesworthia glossinidia brevipalpis.